Consider the following 201-residue polypeptide: Orotate phosphoribosyltransferase (201 aa).

113 to 121 (EDIITTGKS) serves as a coordination point for 5-phospho-alpha-D-ribose 1-diphosphate. Orotate is bound by residues threonine 117 and arginine 145.

The protein belongs to the purine/pyrimidine phosphoribosyltransferase family. PyrE subfamily. In terms of assembly, homodimer. The cofactor is Mg(2+).

It carries out the reaction orotidine 5'-phosphate + diphosphate = orotate + 5-phospho-alpha-D-ribose 1-diphosphate. It participates in pyrimidine metabolism; UMP biosynthesis via de novo pathway; UMP from orotate: step 1/2. In terms of biological role, catalyzes the transfer of a ribosyl phosphate group from 5-phosphoribose 1-diphosphate to orotate, leading to the formation of orotidine monophosphate (OMP). In Helicobacter pylori (strain ATCC 700392 / 26695) (Campylobacter pylori), this protein is Orotate phosphoribosyltransferase.